The chain runs to 53 residues: Lupus La protein homolog (53 aa).

Over residues 1–13 (GKVEFQGKKTKFD) the composition is skewed to basic and acidic residues. Positions 1–53 (GKVEFQGKKTKFDSDDERNENGAAGPVKRAREETDKEEPASKQQKTENGAGDQ) are disordered. Lys-8 bears the N6-acetyllysine mark. Residue Thr-10 is modified to Phosphothreonine. Residue Ser-14 is modified to Phosphoserine. Residues 29–40 (RAREETDKEEPA) are compositionally biased toward basic and acidic residues.

As to quaternary structure, interacts with DDX15. May interact with RUFY1. Phosphorylated.

It localises to the nucleus. Its function is as follows. Binds to the 3' poly(U) terminus of nascent RNA polymerase III transcripts, protecting them from exonuclease digestion and facilitating their folding and maturation. This chain is Lupus La protein homolog (SSB), found in Oryctolagus cuniculus (Rabbit).